A 194-amino-acid polypeptide reads, in one-letter code: Ribonuclease VapC1 (194 aa).

A PINc domain is found at 34–134; the sequence is YVIDTSAIIS…TDDYSIQNVA (101 aa). 2 residues coordinate Mg(2+): aspartate 37 and aspartate 150.

It belongs to the PINc/VapC protein family. The cofactor is Mg(2+).

Toxic component of a type II toxin-antitoxin (TA) system. An RNase. This is Ribonuclease VapC1 from Thermoplasma acidophilum (strain ATCC 25905 / DSM 1728 / JCM 9062 / NBRC 15155 / AMRC-C165).